A 189-amino-acid chain; its full sequence is HGPRTase-like protein 1 (189 aa).

This sequence belongs to the purine/pyrimidine phosphoribosyltransferase family. Archaeal HPRT subfamily.

Functionally, may catalyze a purine salvage reaction, the substrate is unknown. In Natrialba magadii (strain ATCC 43099 / DSM 3394 / CCM 3739 / CIP 104546 / IAM 13178 / JCM 8861 / NBRC 102185 / NCIMB 2190 / MS3) (Natronobacterium magadii), this protein is HGPRTase-like protein 1.